Consider the following 110-residue polypeptide: Parvalbumin alpha (110 aa).

Ser2 carries the N-acetylserine modification. Ser2, Ser8, and Ser24 each carry phosphoserine. 2 EF-hand domains span residues 39-74 (KNPD…FSSD) and 78-110 (LSAK…VAES). Residues Asp52, Asp54, Ser56, Phe58, Glu60, Glu63, Asp91, Asp93, Asp95, Lys97, and Glu102 each coordinate Ca(2+).

Expressed in the modiolar nerve root (at protein level).

In terms of biological role, in muscle, parvalbumin is thought to be involved in relaxation after contraction. It binds two calcium ions. The polypeptide is Parvalbumin alpha (Pvalb) (Mus musculus (Mouse)).